A 109-amino-acid polypeptide reads, in one-letter code: Tyrosine-protein phosphatase 4 (109 aa).

The region spanning serine 1–isoleucine 109 is the Tyrosine-protein phosphatase domain. Glutamate 78 is a substrate binding site.

The protein belongs to the protein-tyrosine phosphatase family.

It carries out the reaction O-phospho-L-tyrosyl-[protein] + H2O = L-tyrosyl-[protein] + phosphate. This Styela plicata (Wrinkled sea squirt) protein is Tyrosine-protein phosphatase 4 (STY-4).